A 255-amino-acid polypeptide reads, in one-letter code: MKIRKKKMKLKGKVKKYLMDKLNDNEKLHFSLLDPFKINSSEELKYIAKNLYNVGTDAFLIGGTLGVSKDKLDFVISLLDDYEIPKIIFPSNINLLSEKADALLFLSLLNSDDIYYVIGAQIVAAPIIKMLQIEVIPTAYVIVGHGGTAAHIGKARVIPYDNFELATAYTLAAEYLGMDFVYLEAGSGAPEPIRPEMISFIKKASSIPLIIGGGIRSVEVALKLVEAGANIIVTGNIIERDVDKAIKIIRGIKNK.

Mg(2+) is bound by residues aspartate 34 and threonine 64. Residues 182–188, 213–214, and 235–236 each bind sn-glycerol 1-phosphate; these read YLEAGSG, GG, and GN.

This sequence belongs to the GGGP/HepGP synthase family. Group II subfamily. Mg(2+) serves as cofactor.

It is found in the cytoplasm. The catalysed reaction is sn-glycerol 1-phosphate + (2E,6E,10E)-geranylgeranyl diphosphate = sn-3-O-(geranylgeranyl)glycerol 1-phosphate + diphosphate. The protein operates within membrane lipid metabolism; glycerophospholipid metabolism. In terms of biological role, prenyltransferase that catalyzes the transfer of the geranylgeranyl moiety of geranylgeranyl diphosphate (GGPP) to the C3 hydroxyl of sn-glycerol-1-phosphate (G1P). This reaction is the first ether-bond-formation step in the biosynthesis of archaeal membrane lipids. The polypeptide is Geranylgeranylglyceryl phosphate synthase (Saccharolobus islandicus (strain M.14.25 / Kamchatka #1) (Sulfolobus islandicus)).